The following is a 439-amino-acid chain: Paraneoplastic antigen-like protein 8A (439 aa).

Positions 213–439 (ETPNNWNATE…RRATNESRKV (227 aa)) are disordered. Residues 231 to 249 (LVRRAGAKSRSRRKKQKKN) are compositionally biased toward basic residues. Over residues 403–419 (KAPQGQQPAEATASTSR) the composition is skewed to polar residues. Basic and acidic residues predominate over residues 423-439 (AKPEGSPRRATNESRKV).

This sequence belongs to the PNMA family.

The sequence is that of Paraneoplastic antigen-like protein 8A (PNMA8A) from Pongo abelii (Sumatran orangutan).